Here is a 287-residue protein sequence, read N- to C-terminus: ATP synthase gamma chain (287 aa).

Belongs to the ATPase gamma chain family. F-type ATPases have 2 components, CF(1) - the catalytic core - and CF(0) - the membrane proton channel. CF(1) has five subunits: alpha(3), beta(3), gamma(1), delta(1), epsilon(1). CF(0) has three main subunits: a, b and c.

The protein localises to the cell inner membrane. Produces ATP from ADP in the presence of a proton gradient across the membrane. The gamma chain is believed to be important in regulating ATPase activity and the flow of protons through the CF(0) complex. This is ATP synthase gamma chain from Serratia proteamaculans (strain 568).